The sequence spans 238 residues: SH2 domain-containing adapter protein F (238 aa).

Disordered regions lie at residues 1-70 (MEPY…PWEW) and 85-121 (GSEN…EPSS). Residue S39 is modified to Phosphoserine. Residues 55-66 (EDDERPPEEYDQ) are compositionally biased toward acidic residues. Y64 carries the phosphotyrosine modification. Residues 138–233 (WYHGAISRTD…AEHMSLLYPV (96 aa)) enclose the SH2 domain.

Interacts with phosphorylated 'Tyr-720' of PDGFRA via its SH2 domain. May become phosphorylated upon binding to PDGFRA.

In terms of biological role, adapter protein which may play a role in the regulation of apoptosis in response to PDGF. The polypeptide is SH2 domain-containing adapter protein F (Mus musculus (Mouse)).